The following is a 141-amino-acid chain: LOB domain-containing protein 34 (141 aa).

The LOB domain occupies 16-119; sequence NQCAACRHQR…SPLNYVAPVI (104 aa).

It belongs to the LOB domain-containing protein family.

This chain is LOB domain-containing protein 34 (LBD34), found in Arabidopsis thaliana (Mouse-ear cress).